The chain runs to 312 residues: Pre-mRNA-splicing factor 38A (312 aa).

The segment at 1-179 (MANRTVKDAH…VLEETEQLDP (179 aa)) is N-terminal protein interaction domain. Residues 180–312 (RVSALEEDMD…SHKKSRRGNE (133 aa)) are disordered. A compositionally biased stretch (acidic residues) spans 184-201 (LEEDMDDVESSEEEEDED). Positions 202-223 (EKGRDPSPEHHRRNYRDLDRPR) are enriched in basic and acidic residues. 2 stretches are compositionally biased toward basic residues: residues 224 to 294 (RSPS…RSHS) and 301 to 312 (KKSHKKSRRGNE).

Belongs to the PRP38 family. Component of the spliceosome B complex.

The protein resides in the nucleus. In terms of biological role, involved in pre-mRNA splicing as a component of the spliceosome. This chain is Pre-mRNA-splicing factor 38A (prpf38a), found in Xenopus tropicalis (Western clawed frog).